The following is a 305-amino-acid chain: Protoheme IX farnesyltransferase (305 aa).

9 helical membrane-spanning segments follow: residues 31–51 (IQVL…KGHV), 53–73 (PLLL…ANAF), 98–118 (ILPW…FAVL), 124–144 (LFAA…YTLW), 153–173 (IVIG…AVTG), 181–201 (VLFG…AMMI), 221–241 (ATAR…LVLY), 242–262 (PLGT…LWLI), and 285–305 (SIFY…FLFA).

Belongs to the UbiA prenyltransferase family. Protoheme IX farnesyltransferase subfamily.

The protein localises to the cell inner membrane. The enzyme catalyses heme b + (2E,6E)-farnesyl diphosphate + H2O = Fe(II)-heme o + diphosphate. Its pathway is porphyrin-containing compound metabolism; heme O biosynthesis; heme O from protoheme: step 1/1. Its function is as follows. Converts heme B (protoheme IX) to heme O by substitution of the vinyl group on carbon 2 of heme B porphyrin ring with a hydroxyethyl farnesyl side group. This chain is Protoheme IX farnesyltransferase, found in Gloeobacter violaceus (strain ATCC 29082 / PCC 7421).